Consider the following 577-residue polypeptide: Arginine--tRNA ligase (577 aa).

Residues 123–133 (PNLAKEMHVGH) carry the 'HIGH' region motif.

This sequence belongs to the class-I aminoacyl-tRNA synthetase family. Monomer.

The protein resides in the cytoplasm. It carries out the reaction tRNA(Arg) + L-arginine + ATP = L-arginyl-tRNA(Arg) + AMP + diphosphate. The sequence is that of Arginine--tRNA ligase from Marinomonas sp. (strain MWYL1).